A 311-amino-acid chain; its full sequence is Cbb3-type cytochrome c oxidase subunit CcoP1 (311 aa).

2 helical membrane passes run 4-24 and 56-76; these read FWSGYIALLTLGTIVALFWLI and RWWFLLFIGTLVFGILYLVLY. 2 Cytochrome c domains span residues 130-209 and 220-302; these read QAVK…RKDL and ADLS…YSLS. Residues C143, C146, H147, M186, C233, C236, H237, and M279 each coordinate heme c.

It belongs to the CcoP / FixP family. In terms of assembly, component of the cbb3-type cytochrome c oxidase at least composed of CcoN, CcoO, CcoQ and CcoP. It depends on heme c as a cofactor.

The protein resides in the cell inner membrane. It participates in energy metabolism; oxidative phosphorylation. C-type cytochrome. Part of the cbb3-type cytochrome c oxidase complex. CcoP subunit is required for transferring electrons from donor cytochrome c via its heme groups to CcoO subunit. From there, electrons are shuttled to the catalytic binuclear center of CcoN subunit where oxygen reduction takes place. The complex also functions as a proton pump. This chain is Cbb3-type cytochrome c oxidase subunit CcoP1, found in Stutzerimonas stutzeri (Pseudomonas stutzeri).